A 115-amino-acid polypeptide reads, in one-letter code: Hydrogenase maturation factor HypA (115 aa).

Residue His2 coordinates Ni(2+). The Zn(2+) site is built by Cys74, Cys77, Cys90, and Cys93.

The protein belongs to the HypA/HybF family.

Involved in the maturation of [NiFe] hydrogenases. Required for nickel insertion into the metal center of the hydrogenase. This Desulfosudis oleivorans (strain DSM 6200 / JCM 39069 / Hxd3) (Desulfococcus oleovorans) protein is Hydrogenase maturation factor HypA.